Here is a 92-residue protein sequence, read N- to C-terminus: Small ribosomal subunit protein uS19 (92 aa).

This sequence belongs to the universal ribosomal protein uS19 family.

Functionally, protein S19 forms a complex with S13 that binds strongly to the 16S ribosomal RNA. This Photorhabdus laumondii subsp. laumondii (strain DSM 15139 / CIP 105565 / TT01) (Photorhabdus luminescens subsp. laumondii) protein is Small ribosomal subunit protein uS19.